The primary structure comprises 351 residues: V-type proton ATPase subunit d1 (351 aa).

Belongs to the V-ATPase V0D/AC39 subunit family. In terms of assembly, V-ATPase is a heteromultimeric enzyme composed of a peripheral catalytic V1 complex (components A to H) attached to an integral membrane V0 proton pore complex (components: a, c, c'', d and e).

It localises to the vacuole membrane. Its function is as follows. Subunit of the integral membrane V0 complex of vacuolar ATPase. Vacuolar ATPase is responsible for acidifying a variety of intracellular compartments in eukaryotic cells, thus providing most of the energy required for transport processes in the vacuolar system. In Arabidopsis thaliana (Mouse-ear cress), this protein is V-type proton ATPase subunit d1 (VHA-d1).